Consider the following 699-residue polypeptide: Elongation factor G (699 aa).

The tr-type G domain maps to Glu-8–Val-290. Residues Ala-17–Thr-24, Asp-88–His-92, and Asn-142–Asp-145 contribute to the GTP site.

Belongs to the TRAFAC class translation factor GTPase superfamily. Classic translation factor GTPase family. EF-G/EF-2 subfamily.

The protein resides in the cytoplasm. Catalyzes the GTP-dependent ribosomal translocation step during translation elongation. During this step, the ribosome changes from the pre-translocational (PRE) to the post-translocational (POST) state as the newly formed A-site-bound peptidyl-tRNA and P-site-bound deacylated tRNA move to the P and E sites, respectively. Catalyzes the coordinated movement of the two tRNA molecules, the mRNA and conformational changes in the ribosome. This is Elongation factor G from Acidithiobacillus ferrooxidans (strain ATCC 23270 / DSM 14882 / CIP 104768 / NCIMB 8455) (Ferrobacillus ferrooxidans (strain ATCC 23270)).